Here is a 141-residue protein sequence, read N- to C-terminus: 3-hydroxyacyl-[acyl-carrier-protein] dehydratase FabZ (141 aa).

His49 is an active-site residue.

This sequence belongs to the thioester dehydratase family. FabZ subfamily.

The protein resides in the cytoplasm. It carries out the reaction a (3R)-hydroxyacyl-[ACP] = a (2E)-enoyl-[ACP] + H2O. Involved in unsaturated fatty acids biosynthesis. Catalyzes the dehydration of short chain beta-hydroxyacyl-ACPs and long chain saturated and unsaturated beta-hydroxyacyl-ACPs. The chain is 3-hydroxyacyl-[acyl-carrier-protein] dehydratase FabZ from Clostridium acetobutylicum (strain ATCC 824 / DSM 792 / JCM 1419 / IAM 19013 / LMG 5710 / NBRC 13948 / NRRL B-527 / VKM B-1787 / 2291 / W).